The primary structure comprises 112 residues: Small ribosomal subunit protein bS6 (112 aa).

This sequence belongs to the bacterial ribosomal protein bS6 family.

Binds together with bS18 to 16S ribosomal RNA. This Azobacteroides pseudotrichonymphae genomovar. CFP2 protein is Small ribosomal subunit protein bS6.